The primary structure comprises 360 residues: 3-dehydroquinate synthase (360 aa).

Residues 72–77 (DGEEFK), 106–110 (GVVGD), 130–131 (TT), lysine 143, lysine 152, and 170–173 (TLTT) contribute to the NAD(+) site. Positions 185, 248, and 265 each coordinate Zn(2+).

The protein belongs to the sugar phosphate cyclases superfamily. Dehydroquinate synthase family. Co(2+) serves as cofactor. It depends on Zn(2+) as a cofactor. Requires NAD(+) as cofactor.

It localises to the cytoplasm. The catalysed reaction is 7-phospho-2-dehydro-3-deoxy-D-arabino-heptonate = 3-dehydroquinate + phosphate. It participates in metabolic intermediate biosynthesis; chorismate biosynthesis; chorismate from D-erythrose 4-phosphate and phosphoenolpyruvate: step 2/7. Catalyzes the conversion of 3-deoxy-D-arabino-heptulosonate 7-phosphate (DAHP) to dehydroquinate (DHQ). This is 3-dehydroquinate synthase from Geobacter metallireducens (strain ATCC 53774 / DSM 7210 / GS-15).